A 314-amino-acid chain; its full sequence is Olfactory receptor 10A6 (314 aa).

The Extracellular portion of the chain corresponds to 1–25 (MERQNQSCVVEFILLGFSNYPELQG). Asparagine 5 is a glycosylation site (N-linked (GlcNAc...) asparagine). The helical transmembrane segment at 26 to 46 (QLFVAFLVIYLVTLIGNAIII) threads the bilayer. Residues 47–54 (VIVSLDQS) are Cytoplasmic-facing. The chain crosses the membrane as a helical span at residues 55-75 (LHVPMYLFLLNLSVVDLSFSA). At 76–99 (VIMPEMLVVLSTEKTTISFGGCFA) the chain is on the extracellular side. Cysteine 97 and cysteine 189 form a disulfide bridge. The helical transmembrane segment at 100 to 120 (QMYFILLFGGAECFLLGAMAY) threads the bilayer. Over 121–139 (DRFAAICHPLNYQMIMNKG) the chain is Cytoplasmic. A helical membrane pass occupies residues 140 to 160 (VFMKLIIFSWALGFMLGTVQT). The Extracellular segment spans residues 161 to 197 (SWVSSFPFCGLNEINHISCETPAVLELACADTFLFEI). The chain crosses the membrane as a helical span at residues 198–217 (YAFTGTFLIILVPFLLILLS). The Cytoplasmic portion of the chain corresponds to 218 to 237 (YIRVLFAILKMPSTTGRQKA). A helical membrane pass occupies residues 238-258 (FSTCAAHLTSVTLFYGTASMT). Topologically, residues 259–271 (YLQPKSGYSPETK) are extracellular. A helical transmembrane segment spans residues 272 to 292 (KVMSLSYSLLTPLLNLLIYSL). Topologically, residues 293–314 (RNSEMKRALMKLWRRRVVLHTI) are cytoplasmic.

The protein belongs to the G-protein coupled receptor 1 family.

It is found in the cell membrane. Odorant receptor. This chain is Olfactory receptor 10A6 (OR10A6), found in Homo sapiens (Human).